The primary structure comprises 167 residues: Stress-related protein (167 aa).

It belongs to the REF/SRPP family.

In terms of biological role, plays a role in plant defense. The sequence is that of Stress-related protein (SRP) from Phaseolus vulgaris (Kidney bean).